The chain runs to 277 residues: Phosphate import ATP-binding protein PstB (277 aa).

Positions 31-272 (LEVPGLNLFY…PAKKQTEDYI (242 aa)) constitute an ABC transporter domain. 63 to 70 (GPSGCGKS) provides a ligand contact to ATP.

This sequence belongs to the ABC transporter superfamily. Phosphate importer (TC 3.A.1.7) family. The complex is composed of two ATP-binding proteins (PstB), two transmembrane proteins (PstC and PstA) (Potential). PstS is missing in this species.

Its subcellular location is the cell inner membrane. It catalyses the reaction phosphate(out) + ATP + H2O = ADP + 2 phosphate(in) + H(+). Part of the ABC transporter complex PstSACB involved in phosphate import. Responsible for energy coupling to the transport system. This chain is Phosphate import ATP-binding protein PstB, found in Pseudomonas aeruginosa (strain ATCC 15692 / DSM 22644 / CIP 104116 / JCM 14847 / LMG 12228 / 1C / PRS 101 / PAO1).